The chain runs to 378 residues: Zinc finger protein DPF3 (378 aa).

K99 is covalently cross-linked (Glycyl lysine isopeptide (Lys-Gly) (interchain with G-Cter in SUMO2)). Residues 145-193 (VLENDENVEEGNEEEDLEEDIPKRKNRTRGRARGSAGGRRRHDAASQED) are disordered. Positions 148 to 163 (NDENVEEGNEEEDLEE) are enriched in acidic residues. Over residues 168–186 (RKNRTRGRARGSAGGRRRH) the composition is skewed to basic residues. The C2H2-type zinc-finger motif lies at 198-221 (YVCDICGKRYKNRPGLSYHYAHTH). The tract at residues 225–254 (EEGDEAQDQETRSPPNHRNENHRPQKGPDG) is disordered. 2 PHD-type zinc fingers span residues 259-319 (NNYC…CKSC) and 316-366 (CKSC…CWEL). Residues 317–332 (KSCILCGTSENDDQLL) form an interaction with HDGFL2 region. Position 323 is a phosphoserine (G323).

The protein belongs to the requiem/DPF family. In terms of assembly, component of the BAF complex, which includes at least actin (ACTB), ARID1A, ARID1B/BAF250, SMARCA2, SMARCA4/BRG1/BAF190A, ACTL6A/BAF53, ACTL6B/BAF53B, SMARCE1/BAF57, SMARCC1/BAF155, SMARCC2/BAF170, SMARCB1/SNF5/INI1, and one or more of SMARCD1/BAF60A, SMARCD2/BAF60B, or SMARCD3/BAF60C. In muscle cells, the BAF complex also contains DPF3. Interacts with acetylated histones H3 and H4. Component of neuron-specific chromatin remodeling complex (nBAF complex) composed of at least, ARID1A/BAF250A or ARID1B/BAF250B, SMARCD1/BAF60A, SMARCD3/BAF60C, SMARCA2/BRM/BAF190B, SMARCA4/BRG1/BAF190A, SMARCB1/BAF47, SMARCC1/BAF155, SMARCE1/BAF57, SMARCC2/BAF170, DPF1/BAF45B, DPF3/BAF45C, ACTL6B/BAF53B and actin. As to quaternary structure, interacts with HDGFL2, SMARCA4/BRG1/BAF190A, SMARCC1/BAF155 and SMARCD1/BAF60A. Post-translationally, phosphorylation at Ser-323 enhances its interaction with HDGFL2.

Its subcellular location is the nucleus. Belongs to the neuron-specific chromatin remodeling complex (nBAF complex). During neural development a switch from a stem/progenitor to a post-mitotic chromatin remodeling mechanism occurs as neurons exit the cell cycle and become committed to their adult state. The transition from proliferating neural stem/progenitor cells to post-mitotic neurons requires a switch in subunit composition of the npBAF and nBAF complexes. As neural progenitors exit mitosis and differentiate into neurons, npBAF complexes which contain ACTL6A/BAF53A and PHF10/BAF45A, are exchanged for homologous alternative ACTL6B/BAF53B and DPF1/BAF45B or DPF3/BAF45C subunits in neuron-specific complexes (nBAF). The npBAF complex is essential for the self-renewal/proliferative capacity of the multipotent neural stem cells. The nBAF complex along with CREST plays a role regulating the activity of genes essential for dendrite growth. Muscle-specific component of the BAF complex, a multiprotein complex involved in transcriptional activation and repression of select genes by chromatin remodeling (alteration of DNA-nucleosome topology). Specifically binds acetylated lysines on histone 3 and 4 (H3K14ac, H3K9ac, H4K5ac, H4K8ac, H4K12ac, H4K16ac). In the complex, it acts as a tissue-specific anchor between histone acetylations and methylations and chromatin remodeling. It thereby probably plays an essential role in heart and skeletal muscle development. Its function is as follows. Acts as a regulator of myogenesis in cooperation with HDGFL2. Mediates the interaction of HDGFL2 with the BAF complex. HDGFL2-DPF3a activate myogenic genes by increasing chromatin accessibility through recruitment of SMARCA4/BRG1/BAF190A (ATPase subunit of the BAF complex) to myogenic gene promoters. This Homo sapiens (Human) protein is Zinc finger protein DPF3 (DPF3).